Here is a 446-residue protein sequence, read N- to C-terminus: 3-phosphoshikimate 1-carboxyvinyltransferase (446 aa).

The 3-phosphoshikimate site is built by Lys30, Ser31, and Arg35. Residue Lys30 participates in phosphoenolpyruvate binding. Residues Gly112 and Arg140 each contribute to the phosphoenolpyruvate site. The 3-phosphoshikimate site is built by Ser186, Ser187, Gln188, Ser215, Glu334, and His361. Gln188 is a phosphoenolpyruvate binding site. The active-site Proton acceptor is Glu334. 3 residues coordinate phosphoenolpyruvate: Arg365, Arg406, and Lys431.

It belongs to the EPSP synthase family. As to quaternary structure, monomer.

The protein resides in the cytoplasm. The catalysed reaction is 3-phosphoshikimate + phosphoenolpyruvate = 5-O-(1-carboxyvinyl)-3-phosphoshikimate + phosphate. It functions in the pathway metabolic intermediate biosynthesis; chorismate biosynthesis; chorismate from D-erythrose 4-phosphate and phosphoenolpyruvate: step 6/7. Catalyzes the transfer of the enolpyruvyl moiety of phosphoenolpyruvate (PEP) to the 5-hydroxyl of shikimate-3-phosphate (S3P) to produce enolpyruvyl shikimate-3-phosphate and inorganic phosphate. This chain is 3-phosphoshikimate 1-carboxyvinyltransferase, found in Streptomyces avermitilis (strain ATCC 31267 / DSM 46492 / JCM 5070 / NBRC 14893 / NCIMB 12804 / NRRL 8165 / MA-4680).